Consider the following 352-residue polypeptide: Ion-translocating oxidoreductase complex subunit D (352 aa).

5 helical membrane passes run 20 to 40 (IMLL…WFFG), 42 to 62 (GTLV…ALVL), 78 to 109 (ALLT…VIIA), 123 to 143 (PAMI…TSWL), and 148 to 168 (IAVN…GHTA). Residue T187 is modified to FMN phosphoryl threonine. 5 helical membrane-spanning segments follow: residues 214 to 234 (ILAG…GVWL), 242 to 262 (WHIP…GWLF), 267 to 287 (LAAP…FFIL), 301 to 321 (LIFG…GGYP), and 322 to 342 (DGVA…DYYT).

It belongs to the NqrB/RnfD family. In terms of assembly, the complex is composed of six subunits: RsxA, RsxB, RsxC, RsxD, RsxE and RsxG. FMN is required as a cofactor.

The protein resides in the cell inner membrane. Its function is as follows. Part of a membrane-bound complex that couples electron transfer with translocation of ions across the membrane. Required to maintain the reduced state of SoxR. Probably transfers electron from NAD(P)H to SoxR. The chain is Ion-translocating oxidoreductase complex subunit D from Escherichia coli (strain K12).